We begin with the raw amino-acid sequence, 68 residues long: MKYFTLALTLLFLLLINPCKDMNFAWAESSEKVERASPQQAKYCYEQCNVNKVPFDQCYQMCSPLERS.

Positions 1 to 21 (MKYFTLALTLLFLLLINPCKD) are cleaved as a signal peptide. A propeptide spanning residues 22-35 (MNFAWAESSEKVER) is cleaved from the precursor. 2 disulfide bridges follow: Cys44–Cys62 and Cys48–Cys58.

It belongs to the short scorpion toxin superfamily. Potassium channel inhibitor kappa-KTx family. Kappa-KTx 1 subfamily. In terms of assembly, monomer. As to expression, expressed by the venom gland.

The protein resides in the secreted. It is found in the host cytoplasm. Functionally, cell-penetrating peptide (CPP) with defensive purpose that induces pain by specifically activating mammalian sensory neuron TRPA1 channels. It non-covalently binds to the same region than other TRPA1 agonists (irritants), but acts via a distinct biochemical mechanism. Its binding stabilizes the TRPA1 open state and diminishes calcium-permeability. Consequently, it produces pain and pain hypersensitivity, but fails to trigger efferent release of neuropeptides (CGRP) and neurogenic inflammation typically produced by noxious electrophiles. Is not active on voltage-gated potassium channels and other TRP channels. The polypeptide is Wasabi receptor toxin (Urodacus manicatus (Black rock scorpion)).